The sequence spans 654 residues: Protein LYK2 (654 aa).

The first 25 residues, 1 to 25, serve as a signal peptide directing secretion; that stretch reads MAVSVSKQYMTSLVVILLFISLSSL. The Extracellular segment spans residues 26 to 241; it reads SPTSTSHSCD…PSKKKRSKMK (216 aa). Cystine bridges form between Cys-50/Cys-102, Cys-57/Cys-163, and Cys-100/Cys-161. Residues Asn-103, Asn-170, Asn-193, and Asn-204 are each glycosylated (N-linked (GlcNAc...) asparagine). Residues 177–217 form a LysM; degenerate repeat; the sequence is YPVGVRDSVSSLAVRFNTTEDAIVSANNKSGVVPLKPALIP. The tract at residues 218 to 238 is disordered; the sequence is LDHKPEKQGSRKRNPSKKKRS. A compositionally biased stretch (basic residues) spans 227–238; it reads SRKRNPSKKKRS. The helical transmembrane segment at 242 to 262 threads the bilayer; sequence LMIAVSSAIAGVCGLVTLMVF. Residues 263–654 lie on the Cytoplasmic side of the membrane; that stretch reads GYLHWKKETQ…PLVKKSSIID (392 aa). Residues 324 to 619 enclose the Protein kinase domain; it reads TPRKPVLEIY…EIAERVSRLV (296 aa). ATP-binding positions include 330 to 338 and Lys-368; that span reads LEIYAFEEL.

It belongs to the protein kinase superfamily. Ser/Thr protein kinase family.

It localises to the cell membrane. May recognize microbe-derived N-acetylglucosamine (NAG)-containing ligands. The polypeptide is Protein LYK2 (LYK2) (Arabidopsis thaliana (Mouse-ear cress)).